The chain runs to 216 residues: Guanylate kinase (216 aa).

Residues 11–189 (GVLIVISGPS…AVKKIEAILL (179 aa)) enclose the Guanylate kinase-like domain. ATP is bound at residue 18–25 (GPSGAGKG).

This sequence belongs to the guanylate kinase family.

The protein resides in the cytoplasm. It catalyses the reaction GMP + ATP = GDP + ADP. Its function is as follows. Essential for recycling GMP and indirectly, cGMP. In Clostridium perfringens (strain SM101 / Type A), this protein is Guanylate kinase.